We begin with the raw amino-acid sequence, 146 residues long: uncharacterized protein (146 aa).

The next 4 membrane-spanning stretches (helical) occupy residues 1-21 (MFAN…AASL), 35-55 (AAVY…LFVG), 87-107 (GGAG…GVGH), and 111-131 (AIAA…GGHL).

Its subcellular location is the cell membrane. This is an uncharacterized protein from Mycobacterium tuberculosis (strain CDC 1551 / Oshkosh).